We begin with the raw amino-acid sequence, 422 residues long: MNPSCVVYVGNIPYEMAEEQVIDIFKQSGPVKSFQLVIDPESGQPKGYGFCEYHDPATAASAVRNLNNYDAGTRRLRVDFPTADQIRRLDKLLGPSRYGYYPQSYANQSYTYGNNFGSYPPTQPSTQPLPQSYGYPSYPPAGYRGGSARPSGVLANDEVYRVLAQLAPNEIDYMLSAIKALCLEAPEQAAQLFETNPQLSYAVFQAMLMKRYTSESVVADLLIPAGVNLPGAQEPNRGYFSPMHTYSSAVPGPISVPSAPYGRASSTIAEVSPMYGSHAAPYASTPSAAVGSSRGSTPASATVPISPARGFPTTSAYNPAPPAYGMANPAYGSTGIRSSSIPSSGSIRSPSLTTTSAQATTNATNNITTTTAAQDENATKAALIAQLMALTDDQINVLPPDQKERILQIRQALPSSYKTESK.

Residues 5 to 83 (CVVYVGNIPY…RRLRVDFPTA (79 aa)) form the RRM domain. The interval 337–358 (RSSSIPSSGSIRSPSLTTTSAQ) is disordered.

The protein localises to the nucleus. This is an uncharacterized protein from Schizosaccharomyces pombe (strain 972 / ATCC 24843) (Fission yeast).